A 42-amino-acid chain; its full sequence is Photosystem I reaction center subunit IX (42 aa).

Residues 8 to 28 traverse the membrane as a helical segment; it reads YLSTAPVLFTVWLSFTASFII.

Belongs to the PsaJ family.

The protein resides in the plastid. The protein localises to the chloroplast thylakoid membrane. May help in the organization of the PsaE and PsaF subunits. This chain is Photosystem I reaction center subunit IX, found in Rhodomonas salina (Cryptomonas salina).